The sequence spans 496 residues: Acyltransferase clz6 (496 aa).

His-163 (proton acceptor) is an active-site residue.

This sequence belongs to the plant acyltransferase family. In terms of assembly, monomer.

It functions in the pathway secondary metabolite biosynthesis. Acyltransferase; part of the gene cluster that mediates the biosynthesis of squalestatin S1 (SQS1, also known as zaragozic acid A), a heavily oxidized fungal polyketide that offers potent cholesterol lowering activity by targeting squalene synthase (SS). SQS1 is composed of a 2,8-dioxobicyclic[3.2.1]octane-3,4,5-tricarboxyclic acid core that is connected to two lipophilic polyketide arms. These initial steps feature the priming of an unusual benzoic acid starter unit onto the highly reducing polyketide synthase clz14, followed by oxaloacetate extension and product release to generate a tricarboxylic acid containing product. The phenylalanine ammonia lyase (PAL) clz10 and the acyl-CoA ligase clz12 are involved in transforming phenylalanine into benzoyl-CoA. The citrate synthase-like protein clz17 is involved in connecting the C-alpha-carbons of the hexaketide chain and oxaloacetate to afford the tricarboxylic acid unit. The potential hydrolytic enzymes, clz11 and clz13, are in close proximity to pks2 and may participate in product release. On the other side, the tetraketide arm is synthesized by a the squalestatin tetraketide synthase clz2 and enzymatically esterified to the core in the last biosynthetic step, by the acetyltransferase clz6. The biosynthesis of the tetraketide must involve 3 rounds of chain extension. After the first and second rounds methyl-transfer occurs, and in all rounds of extension the ketoreductase and dehydratase are active. The enoyl reductase and C-MeT of clz2 are not active in the final round of extension. The acetyltransferase clz6 appears to have a broad substrate selectivity for its acyl CoA substrate, allowing the in vitro synthesis of novel squalestatins. The biosynthesis of SQS1 requires several oxidative steps likely performed by oxidoreductases clz3, clz15 and clz16. Finally, in support of the identification of the cluster as being responsible for SQS1 production, the cluster contains a gene encoding a putative squalene synthase (SS) clz20, suggesting a likely mechanism for self-resistance. In Cochliobolus lunatus (Filamentous fungus), this protein is Acyltransferase clz6.